The following is a 234-amino-acid chain: uncharacterized protein (234 aa).

6 consecutive transmembrane segments (helical) span residues 5-23, 38-60, 73-92, 127-149, 170-192, and 197-217; these read LFYI…LWSF, IPTA…GFWV, AHIQ…AHGW, AITL…YIWL, GVAI…TVIS, and TQAG…ALAF.

It localises to the cell membrane. This is an uncharacterized protein from Archaeoglobus fulgidus (strain ATCC 49558 / DSM 4304 / JCM 9628 / NBRC 100126 / VC-16).